The chain runs to 133 residues: Holo-[acyl-carrier-protein] synthase (133 aa).

Mg(2+) contacts are provided by Asp-8 and Glu-57.

Belongs to the P-Pant transferase superfamily. AcpS family. The cofactor is Mg(2+).

It is found in the cytoplasm. The catalysed reaction is apo-[ACP] + CoA = holo-[ACP] + adenosine 3',5'-bisphosphate + H(+). Transfers the 4'-phosphopantetheine moiety from coenzyme A to a Ser of acyl-carrier-protein. This Bartonella henselae (strain ATCC 49882 / DSM 28221 / CCUG 30454 / Houston 1) (Rochalimaea henselae) protein is Holo-[acyl-carrier-protein] synthase.